Reading from the N-terminus, the 297-residue chain is MLKKNNWLQNAVIAMLVLIVGLCINMGSGTKVQAESIQRPTPINQVFPDPGLANAVKQNLGKQSVTDLVSQKELSGVQNFNGDNSNIQSLAGMQFFTNLKELHLSHNQISDLSPLKDLTKLEELSVNRNRLKNLNGIPSACLSRLFLDNNELRDTDSLIHLKNLEILSIRNNKLKSIVMLGFLSKLEVLDLHGNEITNTGGLTRLKKVNWIDLTGQKCVNEPVKYQPELYITNTVKDPDGRWISPYYISNGGSYVDGCVLWELPVYTDEVSYKFSEYINVGETEAIFDGTVTQPIKN.

Residues 1-34 (MLKKNNWLQNAVIAMLVLIVGLCINMGSGTKVQA) form the signal peptide. 6 LRR repeats span residues 74–96 (LSGVQNFNGDNSNIQSLAGMQFF), 97–120 (TNLKELHLSHNQISDLSPLKDLTK), 122–139 (EELSVNRNRLKNLNGIPS), 140–161 (ACLSRLFLDNNELRDTDSLIHL), 162–184 (KNLEILSIRNNKLKSIVMLGFLS), and 186–207 (LEVLDLHGNEITNTGGLTRLKK).

It belongs to the internalin family. Interacts in vitro with human intestinal mucin-2 (MUC2) but not with mucin-1; binding is slightly better at pH 5.5, (the pH of the intestine) than at pH 7.4. Interacts with the SH3 6 domain of human DNMBP (Tuba). Interacts with I-kappa-B kinase alpha (IKKA, CHUK).

Its subcellular location is the secreted. The protein resides in the host cytoplasm. Functionally, a virulence enhancer that has at least 2 dissociable functions in infection; it impairs translocation of host transcription factor NF-kappa-B to the nucleus and antagonizes the function of the Tuba dynamin-binding protein, promoting bacterial spreading. Perturbs the morphology of host cell junctions by impairing host DNMBP (Tuba) and WASL interaction, altering cortical tension at the cell junctions and allowing bacteria to more efficiently form bacteria-filled cell protrusions which promote bacterial spreading within infected host tissue. Down-regulates the host inflammation response usually induced by Listeria infection. Interacts with host I-kappa-B kinase alpha (IKKA, CHUK), which prevents IKKA from phosphorylating NF-kappa-B inhibitor alpha (IKBA, NFKBIA) and thus delays degradation of phospho-IKBA. Translocation of host transcription factor p65 (a subunit of NF-kappa-B, RELA) into the nucleus is impaired, which prevents activation of NF-KB-regulated genes. Recognized by serum from healthy humans exposed to L.monocytogenes as well from patients who have recovered from listeriosis. The chain is Internalin C from Listeria monocytogenes serotype 1/2a (strain EGD / Mackaness).